The following is a 381-amino-acid chain: Guanine nucleotide-binding protein G(olf) subunit alpha (381 aa).

The segment at 1-25 (MGCLGNSSKTAEDQGVDEKERREAN) is disordered. Residue glycine 2 is the site of N-palmitoyl glycine attachment. Cysteine 3 carries the S-palmitoyl cysteine lipid modification. The span at 10–25 (TAEDQGVDEKERREAN) shows a compositional bias: basic and acidic residues. In terms of domain architecture, G-alpha spans 41–381 (ATHRLLLLGA…RMHLKQYELL (341 aa)). The interval 44–57 (RLLLLGAGESGKST) is G1 motif. GTP is bound by residues glutamate 52, serine 53, glycine 54, lysine 55, serine 56, and threonine 57. Serine 56 serves as a coordination point for Mg(2+). Threonine 178 is modified (phosphothreonine). The interval 183–191 (DLLRCRVLT) is G2 motif. GTP contacts are provided by leucine 185, arginine 186, and threonine 191. Mg(2+)-binding residues include threonine 191 and aspartate 210. The interval 206-215 (FHMFDVGGQR) is G3 motif. GTP-binding residues include glycine 213, asparagine 279, lysine 280, aspartate 282, and alanine 353. The tract at residues 275 to 282 (ILFLNKQD) is G4 motif. The interval 351–356 (TCAVDT) is G5 motif.

This sequence belongs to the G-alpha family. G(s) subfamily. As to quaternary structure, g proteins are composed of 3 units; alpha, beta and gamma. The alpha chain contains the guanine nucleotide binding site. Interacts with GAS2L2. Interacts (GDP-bound form) with RIC8B (via C-terminus); promoting GNAL folding and association with the plasma membrane.

The protein localises to the cell membrane. The catalysed reaction is GTP + H2O = GDP + phosphate + H(+). In terms of biological role, guanine nucleotide-binding protein (G protein) involved as transducer in olfactory signal transduction controlled by G protein-coupled receptors (GPCRs). Contains the guanine nucleotide binding site and alternates between an active, GTP-bound state and an inactive, GDP-bound state. Signaling by an activated GPCR promotes GDP release and GTP binding. The alpha subunit has a low GTPase activity that converts bound GTP to GDP, thereby terminating the signal. Both GDP release and GTP hydrolysis are modulated by numerous regulatory proteins. GNAL/G(olf) alpha specifically mediates olfactory signal transduction within the olfactory neuroepithelium and the basal ganglia following GPCRs activation. Acts by promoting the specific activation of adenylyl cyclase ADCY3, resulting in increased levels of the signaling molecule cAMP. The protein is Guanine nucleotide-binding protein G(olf) subunit alpha of Rattus norvegicus (Rat).